Consider the following 393-residue polypeptide: Digeranylgeranylglycerophospholipid reductase (393 aa).

The FAD site is built by Ala-14, Asp-33, Cys-44, Ala-45, Gly-47, Arg-100, Ala-124, Asp-280, Gly-292, and Ile-293.

Belongs to the geranylgeranyl reductase family. DGGGPL reductase subfamily. The cofactor is FAD.

The catalysed reaction is a 2,3-bis-O-phytanyl-sn-glycerol 1-phospholipid + 8 A = a 2,3-bis-O-(geranylgeranyl)-sn-glycerol 1-phospholipid + 8 AH2. It catalyses the reaction 2,3-bis-O-(phytanyl)-sn-glycerol 1-phosphate + 8 A = 2,3-bis-O-(geranylgeranyl)-sn-glycerol 1-phosphate + 8 AH2. The enzyme catalyses CDP-2,3-bis-O-(geranylgeranyl)-sn-glycerol + 8 AH2 = CDP-2,3-bis-O-(phytanyl)-sn-glycerol + 8 A. It carries out the reaction archaetidylserine + 8 AH2 = 2,3-bis-O-phytanyl-sn-glycero-3-phospho-L-serine + 8 A. The protein operates within membrane lipid metabolism; glycerophospholipid metabolism. In terms of biological role, is involved in the reduction of 2,3-digeranylgeranylglycerophospholipids (unsaturated archaeols) into 2,3-diphytanylglycerophospholipids (saturated archaeols) in the biosynthesis of archaeal membrane lipids. Catalyzes the formation of archaetidic acid (2,3-di-O-phytanyl-sn-glyceryl phosphate) from 2,3-di-O-geranylgeranylglyceryl phosphate (DGGGP) via the hydrogenation of each double bond of the isoprenoid chains. Is also probably able to reduce double bonds of geranyl groups in CDP-2,3-bis-O-(geranylgeranyl)-sn-glycerol and archaetidylserine, thus acting at various stages in the biosynthesis of archaeal membrane lipids. The chain is Digeranylgeranylglycerophospholipid reductase from Methanobrevibacter smithii (strain ATCC 35061 / DSM 861 / OCM 144 / PS).